The chain runs to 434 residues: Enolase (434 aa).

Positions 158 and 167 each coordinate substrate. Glutamate 210 serves as the catalytic Proton donor. The Mg(2+) site is built by aspartate 245, glutamate 294, and aspartate 319. Residues glutamate 294 and aspartate 319 each coordinate substrate. The active-site Proton acceptor is lysine 344. Substrate contacts are provided by residues 371 to 374 and lysine 395; that span reads SHRS.

It belongs to the enolase family. In terms of assembly, homodimer. It depends on Mg(2+) as a cofactor.

It is found in the cytoplasm. The catalysed reaction is (2R)-2-phosphoglycerate = phosphoenolpyruvate + H2O. It participates in carbohydrate degradation; glycolysis; pyruvate from D-glyceraldehyde 3-phosphate: step 4/5. This Doryteuthis pealeii (Longfin inshore squid) protein is Enolase.